The primary structure comprises 129 residues: Cytochrome c3 (129 aa).

An N-terminal signal peptide occupies residues 1 to 22 (MRKLFFCGVLALAVAFALPVVA). Residues His-44, His-47, Cys-52, Cys-55, His-56, His-57, Cys-68, Cys-73, His-74, His-92, Cys-101, Cys-104, His-105, Cys-122, Cys-127, and His-128 each contribute to the heme c site.

Post-translationally, binds 4 heme c groups per subunit.

It is found in the periplasm. Functionally, participates in sulfate respiration coupled with phosphorylation by transferring electrons from the enzyme dehydrogenase to ferredoxin. In Nitratidesulfovibrio vulgaris (strain ATCC 29579 / DSM 644 / CCUG 34227 / NCIMB 8303 / VKM B-1760 / Hildenborough) (Desulfovibrio vulgaris), this protein is Cytochrome c3.